A 580-amino-acid chain; its full sequence is 2-hydroxyacyl-CoA lyase 1 (580 aa).

Thiamine diphosphate is bound at residue glutamate 47. The thiamine pyrophosphate binding stretch occupies residues 413–494 (TMDIGRLCIP…FIVLNNNGVY (82 aa)). Positions 463 and 490 each coordinate Mg(2+).

The protein belongs to the TPP enzyme family. Homotetramer. It depends on Mg(2+) as a cofactor. Thiamine diphosphate is required as a cofactor.

Its subcellular location is the peroxisome. The catalysed reaction is a 2-hydroxy-3-methyl fatty acyl-CoA = a 2-methyl-branched fatty aldehyde + formyl-CoA. It catalyses the reaction an (R)-2-hydroxy-long-chain-fatty acyl-CoA = a long-chain fatty aldehyde + formyl-CoA. The enzyme catalyses 2-hydroxy-3-methylhexadecanoyl-CoA = 2-methylpentadecanal + formyl-CoA. It carries out the reaction 2-hydroxyoctadecanoyl-CoA = heptadecanal + formyl-CoA. In terms of biological role, peroxisomal 2-OH acyl-CoA lyase involved in the cleavage (C1 removal) reaction in the fatty acid alpha-oxydation in a thiamine pyrophosphate (TPP)-dependent manner. Involved in the degradation of 3-methyl-branched fatty acids and the shortening of 2-hydroxy long-chain fatty acids. The protein is 2-hydroxyacyl-CoA lyase 1 (hacl1) of Dictyostelium discoideum (Social amoeba).